A 397-amino-acid polypeptide reads, in one-letter code: Proteinase-activated receptor 2 (397 aa).

The first 25 residues, methionine 1 to threonine 25, serve as a signal peptide directing secretion. The N-linked (GlcNAc...) asparagine glycan is linked to asparagine 23. The propeptide at valine 26 to arginine 36 is removed for receptor activation. The Extracellular portion of the chain corresponds to serine 37–glycine 71. A helical transmembrane segment spans residues lysine 72 to phenylalanine 101. Topologically, residues phenylalanine 102 to histidine 108 are cytoplasmic. The chain crosses the membrane as a helical span at residues proline 109–histidine 137. Topologically, residues glycine 138 to lysine 149 are extracellular. Residues cysteine 148 and cysteine 226 are joined by a disulfide bond. A helical transmembrane segment spans residues valine 150–isoleucine 177. The Cytoplasmic segment spans residues valine 178–histidine 183. Residues serine 184–valine 211 traverse the membrane as a helical segment. Over methionine 212–leucine 235 the chain is Extracellular. Asparagine 222 carries N-linked (GlcNAc...) asparagine glycosylation. A helical transmembrane segment spans residues valine 236–leucine 269. At arginine 270–histidine 277 the chain is on the cytoplasmic side. Residues serine 278–glutamine 317 traverse the membrane as a helical segment. Over arginine 318–tyrosine 323 the chain is Extracellular. A helical membrane pass occupies residues alanine 324–valine 347. The Cytoplasmic segment spans residues serine 348–tyrosine 397. Cysteine 361 carries S-palmitoyl cysteine lipidation.

It belongs to the G-protein coupled receptor 1 family. As to quaternary structure, interacts with TLR4, COPS5 and TMED2. Interacts with GNAQ, GNA11, GNA12, GNA13 and GNA14. A proteolytic cleavage generates a new N-terminus that functions as a tethered ligand. Activating serine proteases include trypsin, mast cell tryptase, coagulation factors VII and Xa, myeloblastin/PRTN3 and membrane-type serine protease 1/ST14. Proposed subsequent cleavage by serine proteases is leading to receptor deactivation and include neutrophil elastase and cathepsin G. At least in part, implicated proteases are also shown to activate the receptor; the glycosylation status of the receptor is thought to contribute to the difference. Post-translationally, N-glycosylated and sialylated. In terms of processing, multiple phosphorylated on serine and threonine residues in the cytoplasmic region upon receptor activation; required for receptor desensitization and recruitment of beta-arrestin. Monoubiquitinated by Cbl at the plasma membrane and in early endosomes; not required for receptor endocytosis but for translocation to late endosomes or lysosomes. Deubiquitination involves Stambp and Usp8; required for lysosomal trafficking and receptor degradation.

It localises to the cell membrane. In terms of biological role, receptor for trypsin and trypsin-like enzymes coupled to G proteins. Its function is mediated through the activation of several signaling pathways including phospholipase C (PLC), intracellular calcium, mitogen-activated protein kinase (MAPK), I-kappaB kinase/NF-kappaB and Rho. Can also be transactivated by cleaved F2R/PAR1. Involved in modulation of inflammatory responses and regulation of innate and adaptive immunity, and acts as a sensor for proteolytic enzymes generated during infection. Generally is promoting inflammation. Can signal synergistically with TLR4 and probably TLR2 in inflammatory responses and modulates Tlr3 signaling. Has a protective role in establishing the endothelial barrier; the activity involves coagulation factor X. Regulates endothelial cell barrier integrity during neutrophil extravasation, probably following proteolytic cleavage by PRTN3. Proposed to have a bronchoprotective role in airway epithelium, but also shown to compromise the airway epithelial barrier by interrupting E-cadherin adhesion. Involved in the regulation of vascular tone; activation results in hypotension presumably mediated by vasodilation. Associates with a subset of G proteins alpha subunits such as GNAQ, GNA11, GNA14, GNA12 and GNA13, but probably not with G(o)-alpha, G(i) subunit alpha-1 and G(i) subunit alpha-2. Believed to be a class B receptor which internalizes as a complex with arrestin and traffic with it to endosomal vesicles, presumably as desensitized receptor, for extended periods of time. Mediates inhibition of TNF-alpha stimulated JNK phosphorylation via coupling to G GNAQ and GNA11; the function involves dissociation of RIPK1 and Tradd from TNFR1. Mediates phosphorylation of nuclear factor NF-kappa-B RELA subunit at 'Ser-536'; the function involves Ikbkb and is predominantly independent of G proteins. Involved in cellular migration. Involved in cytoskeletal rearrangement and chemotaxis through beta-arrestin-promoted scaffolds; the function is independent of GNAQ and GNA11 and involves promotion of cofilin dephosphorylation and actin filament severing. Induces redistribution of COPS5 from the plasma membrane to the cytosol and activation of the JNK cascade is mediated by Cops5. Involved in the recruitment of leukocytes to the sites of inflammation and is the major PAR receptor capable of modulating eosinophil function such as pro-inflammatory cytokine secretion, superoxide production and degranulation. During inflammation promotes dendritic cell maturation, trafficking to the lymph nodes and subsequent T-cell activation. Involved in antimicrobial response of innate immune cells; activation enhances phagocytosis of Gram-positive and killing of Gram-negative bacteria. Acts synergistically with interferon-gamma in enhancing antiviral responses. Probably mediates activation of pro-inflammatory and pro-fibrotic responses in fibroblasts, triggered by coagulation factor Xa (F10). Probably mediates activation of barrier protective signaling responses in endothelial cells, triggered by coagulation factor Xa (F10). The chain is Proteinase-activated receptor 2 (F2rl1) from Rattus norvegicus (Rat).